The chain runs to 446 residues: DDB1- and CUL4-associated factor 12 (446 aa).

The segment covering Met1–Ala12 has biased composition (basic residues). The tract at residues Met1 to Arg33 is disordered. 4 WD repeats span residues Ser132–Val173, Gly177–Ser215, Pro245–Leu284, and Glu333–Asp370.

Belongs to the WD repeat DCAF12 family. In terms of assembly, component of the DCX(DCAF12) E3 ubiquitin ligase complex, at least composed of cul4 (cul4a or cul4b), ddb1, dcaf12 and rbx1.

Its subcellular location is the cytoplasm. The protein localises to the cytoskeleton. It is found in the microtubule organizing center. The protein resides in the centrosome. It localises to the nucleus. Its pathway is protein modification; protein ubiquitination. In terms of biological role, substrate-recognition component of a DCX (DDB1-CUL4-X-box) E3 ubiquitin-protein ligase complex of the DesCEND (destruction via C-end degrons) pathway, which recognizes a C-degron located at the extreme C terminus of target proteins, leading to their ubiquitination and degradation. The C-degron recognized by the DesCEND pathway is usually a motif of less than ten residues and can be present in full-length proteins, truncated proteins or proteolytically cleaved forms. The DCX(DCAF12) complex specifically recognizes proteins with a diglutamate (Glu-Glu) at the C-terminus leading to their ubiquitination and degradation. Also directly recognizes the C-terminal glutamate-leucine (Glu-Leu) degron as an alternative degron in proteins leading to their ubiquitination and degradation. The polypeptide is DDB1- and CUL4-associated factor 12 (Xenopus tropicalis (Western clawed frog)).